A 284-amino-acid polypeptide reads, in one-letter code: MVQIIDGKALAQKMQAALAKKVESLKAEKGIVPGLVVILVGDNPASQVYVRNKERAALAAGFKSETVRLSDSVCQEELIELIEQYNQDDTIHGILVQLPLPHHINDKSIILAIDPKKDVDGFHPMNTGHLWSGRPNMVPCTPAGIMEMFHDYGIELEGKNAVIVGRSNIVGKPMAQLLLDKNATVTLTHSRTRQLAAICRRADILIVAIGQGHFITKDFVKEGAVVIDVGMNRDVNGRLIGDVAFDEVSELASMITPVPGGVGPMTITMLLEQTYQAALRRVSQ.

NADP(+) is bound by residues 165-167 (GRS) and Ser-190.

This sequence belongs to the tetrahydrofolate dehydrogenase/cyclohydrolase family. Homodimer.

It carries out the reaction (6R)-5,10-methylene-5,6,7,8-tetrahydrofolate + NADP(+) = (6R)-5,10-methenyltetrahydrofolate + NADPH. The enzyme catalyses (6R)-5,10-methenyltetrahydrofolate + H2O = (6R)-10-formyltetrahydrofolate + H(+). It participates in one-carbon metabolism; tetrahydrofolate interconversion. In terms of biological role, catalyzes the oxidation of 5,10-methylenetetrahydrofolate to 5,10-methenyltetrahydrofolate and then the hydrolysis of 5,10-methenyltetrahydrofolate to 10-formyltetrahydrofolate. This is Bifunctional protein FolD from Streptococcus equi subsp. zooepidemicus (strain H70).